The chain runs to 569 residues: Ferredoxin--nitrite reductase, chloroplastic (569 aa).

A chloroplast-targeting transit peptide spans 1–4; the sequence is IPGR. Residues 1 to 28 form a disordered region; it reads IPGRTGRARAAVSVPPPAGEQVPTERLE. Positions 447, 453, 488, and 492 each coordinate [4Fe-4S] cluster. C492 is a siroheme binding site.

The protein belongs to the nitrite and sulfite reductase 4Fe-4S domain family. In terms of assembly, monomer. Siroheme serves as cofactor. Requires [4Fe-4S] cluster as cofactor.

Its subcellular location is the plastid. It localises to the chloroplast. It catalyses the reaction 6 oxidized [2Fe-2S]-[ferredoxin] + NH4(+) + 2 H2O = nitrite + 6 reduced [2Fe-2S]-[ferredoxin] + 8 H(+). It participates in nitrogen metabolism; nitrate reduction (assimilation). This Zea mays (Maize) protein is Ferredoxin--nitrite reductase, chloroplastic (NIR).